Consider the following 482-residue polypeptide: Peptide chain release factor PrfB2, chloroplastic (482 aa).

The transit peptide at 1-21 directs the protein to the chloroplast; sequence MLSLIIRRSRSRFIIHGIKIS.

It belongs to the prokaryotic/mitochondrial release factor family.

The protein resides in the plastid. Its subcellular location is the chloroplast stroma. In terms of biological role, directs the termination of translation in response to the peptide chain termination codon UGA. Required for the proper translation, stability and normal processing of UGA-containing polycistronic transcripts in chloroplasts. The chain is Peptide chain release factor PrfB2, chloroplastic from Arabidopsis thaliana (Mouse-ear cress).